Reading from the N-terminus, the 205-residue chain is Basonuclin zinc finger protein homolog (205 aa).

2 consecutive C2H2-type zinc fingers follow at residues 107–130 (VACD…SAVH) and 135–164 (HTCT…PKLH). Residues 145–168 (QFSSRRSRNRHSSNNNPKLHMPES) form a disordered region.

As to expression, expressed in the VA and VB motor neurons and at lower levels in the SABV neuron pair.

It localises to the nucleus. Functionally, probable transcription factor. Involved in motor neuron fate determination and maintenance, acting as a transcriptional repressor to counteract gene activation by transcription factor unc-3 in a subset of motor neurons. Required throughout development to repress transcription by unc-3, probably acting by binding to specific promoter elements. Represses expression of DA and DB motor neuron-specific effector genes, such as unc-129 and unc-53, in VA and VB motor neurons. This is Basonuclin zinc finger protein homolog from Caenorhabditis elegans.